The primary structure comprises 258 residues: Small ribosomal subunit protein mS23 (258 aa).

It belongs to the mitochondrion-specific ribosomal protein mS23 family. As to quaternary structure, component of the mitochondrial small ribosomal subunit.

Its subcellular location is the mitochondrion. The protein is Small ribosomal subunit protein mS23 of Aspergillus fumigatus (strain CBS 144.89 / FGSC A1163 / CEA10) (Neosartorya fumigata).